The primary structure comprises 334 residues: Nucleoid-associated protein YPK_2796 (334 aa).

Belongs to the YejK family.

The protein localises to the cytoplasm. Its subcellular location is the nucleoid. The protein is Nucleoid-associated protein YPK_2796 of Yersinia pseudotuberculosis serotype O:3 (strain YPIII).